A 440-amino-acid chain; its full sequence is SET domain-containing protein 4 (440 aa).

Basic residues predominate over residues 1–16 (MQKGKGRTSRIRRRKL). A disordered region spans residues 1–24 (MQKGKGRTSRIRRRKLCGSSESRG). The region spanning 48–273 (SNLAPACFPG…KHEEVFICYG (226 aa)) is the SET domain. Tyr-272 lines the S-adenosyl-L-methionine pocket.

Belongs to the class V-like SAM-binding methyltransferase superfamily. SETD4 family. As to quaternary structure, forms a ternary complex with TBK1 and ZNF268; the interaction with TBK1 is ZNF268-dependent and leads to TBK1 monomethylation.

The protein resides in the cytoplasm. The protein localises to the cytosol. Its subcellular location is the nucleus. The catalysed reaction is L-lysyl(4)-[histone H3] + S-adenosyl-L-methionine = N(6)-methyl-L-lysyl(4)-[histone H3] + S-adenosyl-L-homocysteine + H(+). It catalyses the reaction N(6)-methyl-L-lysyl(4)-[histone H3] + S-adenosyl-L-methionine = N(6),N(6)-dimethyl-L-lysyl(4)-[histone H3] + S-adenosyl-L-homocysteine + H(+). It carries out the reaction L-lysyl(20)-[histone H4] + S-adenosyl-L-methionine = N(6)-methyl-L-lysyl(20)-[histone H4] + S-adenosyl-L-homocysteine + H(+). The enzyme catalyses N(6)-methyl-L-lysyl(20)-[histone H4] + S-adenosyl-L-methionine = N(6),N(6)-dimethyl-L-lysyl(20)-[histone H4] + S-adenosyl-L-homocysteine + H(+). The catalysed reaction is N(6),N(6)-dimethyl-L-lysyl(20)-[histone H4] + S-adenosyl-L-methionine = N(6),N(6),N(6)-trimethyl-L-lysyl(20)-[histone H4] + S-adenosyl-L-homocysteine + H(+). It catalyses the reaction L-lysyl-[protein] + S-adenosyl-L-methionine = N(6)-methyl-L-lysyl-[protein] + S-adenosyl-L-homocysteine + H(+). Functionally, protein-lysine N-methyltransferase that methylates both histones and non-histone proteins. Via its catalytic activity, regulates many processes, including cell proliferation, cell differentiation, inflammatory response and apoptosis. Regulates the inflammatory response by mediating mono- and dimethylation of 'Lys-4' of histone H3 (H3K4me1 and H3K4me2, respectively), leading to activate the transcription of pro-inflammatory cytokines IL6 and TNF-alpha. Through the catalysis of TBK1 monomethylation, may regulate virus-induced interferon signaling. TBK1 monomethylation enhances its interaction with MAVS, STING and IRF3, hence promoting antiviral interferon signaling. Also involved in the regulation of stem cell quiescence by catalyzing the trimethylation of 'Lys-20' of histone H4 (H4K20me3), thereby promoting heterochromatin formation. In the brain, epigenetically controls quiescence of neural stem cells for sustaining a protected neural stem cell population and maintaining a stem cell reservoir for neurogenesis. Involved in proliferation, migration, paracrine and myogenic differentiation of bone marrow mesenchymal stem cells (BMSCs). Through the catalysis of XRCC5/Ku70 trimethylation, regulates BAX-mediated apoptosis. SETD4-catalyzed XRCC5 methylation results in XRCC5 translocation to the cytoplasm, where it interacts with BAX, sequestering it from the mitochondria, hence preventing BAX-mediated apoptosis. This chain is SET domain-containing protein 4, found in Homo sapiens (Human).